We begin with the raw amino-acid sequence, 516 residues long: Exoglucanase 1 (516 aa).

A signal peptide spans 1–17; it reads MRASLLAFSLAAAVAGG. Residues 18–445 are catalytic; that stretch reads QQAGTLTAKR…GHLGISPFSG (428 aa). Residue N45 is glycosylated (N-linked (GlcNAc...) asparagine). E223 serves as the catalytic Nucleophile. The Proton donor role is filled by E228. N-linked (GlcNAc...) asparagine glycosylation occurs at N281. The interval 444–481 is disordered; sequence SGGSSGTPPSNPSSSASPTSSTAKPSSTSTASNPSGTG. A linker region spans residues 446–480; the sequence is GSSGTPPSNPSSSASPTSSTAKPSSTSTASNPSGT. Low complexity predominate over residues 449 to 481; it reads GTPPSNPSSSASPTSSTAKPSSTSTASNPSGTG. Positions 480-516 constitute a CBM1 domain; sequence TGAAHWAQCGGIGFSGPTTCPEPYTCAKDHDIYSQCV. Cystine bridges form between C488–C505 and C499–C515.

The protein belongs to the glycosyl hydrolase 7 (cellulase C) family.

It is found in the secreted. It catalyses the reaction Hydrolysis of (1-&gt;4)-beta-D-glucosidic linkages in cellulose and cellotetraose, releasing cellobiose from the non-reducing ends of the chains.. This chain is Exoglucanase 1 (cbh-1), found in Neurospora crassa (strain ATCC 24698 / 74-OR23-1A / CBS 708.71 / DSM 1257 / FGSC 987).